A 463-amino-acid polypeptide reads, in one-letter code: Fumarate hydratase class II (463 aa).

Substrate contacts are provided by residues 98 to 100 (SGT), 129 to 132 (HPND), 139 to 141 (SSN), and Thr-187. Residues 121–141 (KKGGKSPVHPNDHVNKGQSSN) are disordered. His-188 serves as the catalytic Proton donor/acceptor. Ser-318 is an active-site residue. Residues Ser-319 and 324 to 326 (KVN) each bind substrate.

The protein belongs to the class-II fumarase/aspartase family. Fumarase subfamily. In terms of assembly, homotetramer.

It localises to the cytoplasm. The enzyme catalyses (S)-malate = fumarate + H2O. It participates in carbohydrate metabolism; tricarboxylic acid cycle; (S)-malate from fumarate: step 1/1. Involved in the TCA cycle. Catalyzes the stereospecific interconversion of fumarate to L-malate. The protein is Fumarate hydratase class II of Rickettsia conorii (strain ATCC VR-613 / Malish 7).